The sequence spans 441 residues: Arginine biosynthesis bifunctional protein ArgJ, mitochondrial (441 aa).

Substrate-binding residues include Thr177, Lys204, Thr215, Glu301, Asn436, and Ser441. Thr215 serves as the catalytic Nucleophile.

It belongs to the ArgJ family. Heterodimer of an alpha and a beta chain. The alpha and beta chains are autoproteolytically processed from a single precursor protein within the mitochondrion.

The protein localises to the mitochondrion matrix. The enzyme catalyses N(2)-acetyl-L-ornithine + L-glutamate = N-acetyl-L-glutamate + L-ornithine. The catalysed reaction is L-glutamate + acetyl-CoA = N-acetyl-L-glutamate + CoA + H(+). It functions in the pathway amino-acid biosynthesis; L-arginine biosynthesis; L-ornithine and N-acetyl-L-glutamate from L-glutamate and N(2)-acetyl-L-ornithine (cyclic): step 1/1. Its pathway is amino-acid biosynthesis; L-arginine biosynthesis; N(2)-acetyl-L-ornithine from L-glutamate: step 1/4. In terms of biological role, catalyzes two activities which are involved in the cyclic version of arginine biosynthesis: the synthesis of acetylglutamate from glutamate and acetyl-CoA, and of ornithine by transacetylation between acetylornithine and glutamate. This Kluyveromyces lactis (strain ATCC 8585 / CBS 2359 / DSM 70799 / NBRC 1267 / NRRL Y-1140 / WM37) (Yeast) protein is Arginine biosynthesis bifunctional protein ArgJ, mitochondrial.